A 412-amino-acid polypeptide reads, in one-letter code: Decapping nuclease RAI1 (412 aa).

An a divalent metal cation-binding site is contributed by E196. Residues C228 and E245 each contribute to the substrate site. 3 residues coordinate a divalent metal cation: D247, E265, and L266. 2 residues coordinate substrate: K267 and Q291.

It belongs to the DXO/Dom3Z family. Interacts with exr-1/rat1; the interaction is direct, stabilizes exr-1 protein structure and stimulates its exoribonuclease activity. The interaction also stimulates rai1 pyrophosphohydrolase activity, probably by recruiting it to mRNA substrates. A divalent metal cation is required as a cofactor.

It is found in the nucleus. It catalyses the reaction a 5'-end NAD(+)-phospho-ribonucleoside in mRNA + H2O = a 5'-end phospho-ribonucleoside in mRNA + NAD(+) + H(+). The enzyme catalyses a 5'-end (N(7)-methyl 5'-triphosphoguanosine)-ribonucleoside-ribonucleotide in mRNA + H2O = a (N(7)-methyl 5'-triphosphoguanosine)-nucleoside + a 5'-end phospho-ribonucleoside in mRNA + H(+). It carries out the reaction a 5'-end triphospho-ribonucleoside in mRNA + H2O = a 5'-end phospho-ribonucleoside in mRNA + diphosphate + H(+). Decapping enzyme for NAD-capped RNAs: specifically hydrolyzes the nicotinamide adenine dinucleotide (NAD) cap from a subset of RNAs by removing the entire NAD moiety from the 5'-end of an NAD-capped RNA. The NAD-cap is present at the 5'-end of some RNAs and snoRNAs. In contrast to the canonical 5'-end N7 methylguanosine (m7G) cap, the NAD cap promotes mRNA decay. Also acts as a non-canonical decapping enzyme that removes the entire cap structure of m7G capped or incompletely capped RNAs. Has decapping activity toward incomplete 5'-end m7G cap mRNAs such as unmethylated 5'-end-capped RNA (cap0), while it has no activity toward 2'-O-ribose methylated m7G cap (cap1). Also possesses RNA 5'-pyrophosphohydrolase activity by hydrolyzing the 5'-end triphosphate to release pyrophosphates. Stimulates exoribonuclease activity of Rat1, allowing it to degrade RNAs with stable secondary structure more effectively. This chain is Decapping nuclease RAI1 (rai1), found in Neurospora crassa (strain ATCC 24698 / 74-OR23-1A / CBS 708.71 / DSM 1257 / FGSC 987).